The primary structure comprises 343 residues: Anthranilate phosphoribosyltransferase (343 aa).

5-phospho-alpha-D-ribose 1-diphosphate contacts are provided by residues glycine 86, 89 to 90 (GD), threonine 94, 96 to 99 (NIST), 114 to 122 (KHGNRSASG), and serine 126. Glycine 86 contacts anthranilate. Serine 98 serves as a coordination point for Mg(2+). Asparagine 117 contacts anthranilate. Anthranilate is bound at residue arginine 172. Aspartate 231 and glutamate 232 together coordinate Mg(2+).

It belongs to the anthranilate phosphoribosyltransferase family. Homodimer. Mg(2+) serves as cofactor.

The catalysed reaction is N-(5-phospho-beta-D-ribosyl)anthranilate + diphosphate = 5-phospho-alpha-D-ribose 1-diphosphate + anthranilate. It participates in amino-acid biosynthesis; L-tryptophan biosynthesis; L-tryptophan from chorismate: step 2/5. Functionally, catalyzes the transfer of the phosphoribosyl group of 5-phosphorylribose-1-pyrophosphate (PRPP) to anthranilate to yield N-(5'-phosphoribosyl)-anthranilate (PRA). The polypeptide is Anthranilate phosphoribosyltransferase (Synechococcus sp. (strain JA-3-3Ab) (Cyanobacteria bacterium Yellowstone A-Prime)).